Reading from the N-terminus, the 210-residue chain is Putative Dihydrofolate reductase (210 aa).

A DHFR domain is found at 4–184 (TLYCVVAVDT…IFYMFETYIK (181 aa)).

Belongs to the dihydrofolate reductase family.

It carries out the reaction (6S)-5,6,7,8-tetrahydrofolate + NADP(+) = 7,8-dihydrofolate + NADPH + H(+). The sequence is that of Putative Dihydrofolate reductase (ORF2) from Human herpesvirus 8 type P (isolate GK18) (HHV-8).